The sequence spans 417 residues: UPF0754 membrane protein PCC8801_0398 (417 aa).

2 helical membrane-spanning segments follow: residues 11-31 (FSLL…GYFT) and 395-415 (IVNI…ILLI).

The protein belongs to the UPF0754 family.

The protein localises to the cell inner membrane. The chain is UPF0754 membrane protein PCC8801_0398 from Rippkaea orientalis (strain PCC 8801 / RF-1) (Cyanothece sp. (strain PCC 8801)).